A 121-amino-acid polypeptide reads, in one-letter code: Acid shock protein (121 aa).

The first 21 residues, 1-21 (MKKVLALMVAATLGLSSVAFA), serve as a signal peptide directing secretion. The propeptide occupies 22–63 (ADTTATATPAATSTTATVAAQTKATQHQKHKVTKKTTEQKAQ). Residues 40–121 (AAQTKATQHQ…AKKPVAAPAA (82 aa)) are disordered. Basic residues predominate over residues 84-93 (AAKKHVKKAS). Low complexity predominate over residues 94 to 103 (VQKAPVQKAQ). The segment covering 104 to 113 (AAKKHHKTAK) has biased composition (basic residues).

It belongs to the Asr family. Proteolytic processing gives rise to the active protein.

The protein localises to the periplasm. Its function is as follows. Required for growth and/or survival at acidic conditions. This Yersinia pestis bv. Antiqua (strain Antiqua) protein is Acid shock protein.